Reading from the N-terminus, the 502-residue chain is Mannitol 2-dehydrogenase (502 aa).

Residue 37–48 participates in NAD(+) binding; the sequence is IVHIGVGGFHRA.

It belongs to the mannitol dehydrogenase family. Monomer.

It carries out the reaction D-mannitol + NAD(+) = D-fructose + NADH + H(+). Functionally, catalyzes the NAD(H)-dependent interconversion of D-fructose and D-mannitol in the mannitol metabolic pathway. The chain is Mannitol 2-dehydrogenase from Aspergillus fumigatus (strain CBS 144.89 / FGSC A1163 / CEA10) (Neosartorya fumigata).